A 507-amino-acid chain; its full sequence is ATP synthase subunit alpha, chloroplastic (507 aa).

170 to 177 (GDRQTGKT) contributes to the ATP binding site.

It belongs to the ATPase alpha/beta chains family. In terms of assembly, F-type ATPases have 2 components, CF(1) - the catalytic core - and CF(0) - the membrane proton channel. CF(1) has five subunits: alpha(3), beta(3), gamma(1), delta(1), epsilon(1). CF(0) has four main subunits: a, b, b' and c.

The protein resides in the plastid. It localises to the chloroplast thylakoid membrane. The enzyme catalyses ATP + H2O + 4 H(+)(in) = ADP + phosphate + 5 H(+)(out). In terms of biological role, produces ATP from ADP in the presence of a proton gradient across the membrane. The alpha chain is a regulatory subunit. The sequence is that of ATP synthase subunit alpha, chloroplastic from Tetradesmus obliquus (Green alga).